The following is a 383-amino-acid chain: MGAGGRMPVPTSSKKSETDTTKRVPCEKPPFSVGDLKKAIPPHCFKRSIPRSFSYLISDIIIASCFYYVATNYFSLLPQPLSYLAWPLYWACQGCVLTGIWVIAHECGHHAFSDYQWLDDTVGLIFHSFLLVPYFSWKYSHRRHHSNTGSLERDEVFVPKQKSAIKWYGKYLNNPLGRIMMLTVQFVLGWPLYLAFNVSGRPYDGFACHFFPNAPIYNDRERLQIYLSDAGILAVCFGLYRYAAAQGMASMICLYGVPLLIVNAFLVLITYLQHTHPSLPHYDSSEWDWLRGALATVDRDYGILNKVFHNITDTHVAHHLFSTMPHYNAMEATKAIKPILGDYYQFDGTPWYVAMYREAKECIYVEPDREGDKKGVYWYNNKL.

Residues 1–24 (MGAGGRMPVPTSSKKSETDTTKRV) are disordered. The segment covering 14–24 (KKSETDTTKRV) has biased composition (basic and acidic residues). The helical transmembrane segment at 56–76 (LISDIIIASCFYYVATNYFSL) threads the bilayer. The short motif at 105-109 (HECGH) is the Histidine box-1 element. Residues 117 to 137 (WLDDTVGLIFHSFLLVPYFSW) form a helical membrane-spanning segment. The Histidine box-2 motif lies at 141-145 (HRRHH). 3 helical membrane passes run 179-199 (IMML…FNVS), 225-245 (IYLS…YAAA), and 252-272 (ICLY…ITYL). Residues 315–319 (HVAHH) carry the Histidine box-3 motif.

The protein belongs to the fatty acid desaturase type 1 family. As to quaternary structure, homo- and heterodimer. Interacts with FAD3 but not with FAD6. FAD2-FAD3 heterodimers can form a metabolic channel in which 18:1-PC is converted to 18:3-PC without releasing a free 18:2-PC intermediate. In terms of tissue distribution, expressed in shoots and roots. Expressed in leaves, stems, flowers and siliques.

The protein resides in the endoplasmic reticulum membrane. It is found in the microsome membrane. It catalyses the reaction (9Z)-octadecenoyl-CoA + 2 Fe(II)-[cytochrome b5] + O2 + 2 H(+) = (9Z,12Z)-octadecadienoyl-CoA + 2 Fe(III)-[cytochrome b5] + 2 H2O. It carries out the reaction (9Z)-hexadecenoyl-CoA + 2 Fe(II)-[cytochrome b5] + O2 + 2 H(+) = (9Z,12Z)-hexadecadienoyl-CoA + 2 Fe(III)-[cytochrome b5] + 2 H2O. The catalysed reaction is a (9Z)-octadecenoyl-containing glycerolipid + 2 Fe(II)-[cytochrome b5] + O2 + 2 H(+) = a (9Z,12Z)-octadecadienoyl-containing glycerolipid + 2 Fe(III)-[cytochrome b5] + 2 H2O. The enzyme catalyses (9Z)-octadecenoyl-CoA + AH2 + O2 = (9Z,12Z)-octadecadienoyl-CoA + A + 2 H2O. It catalyses the reaction (9Z)-hexadecenoyl-CoA + AH2 + O2 = (9Z,12Z)-hexadecadienoyl-CoA + A + 2 H2O. It carries out the reaction (9Z)-tetradecenoyl-CoA + 2 Fe(II)-[cytochrome b5] + O2 + 2 H(+) = (9Z,12Z)-tetradecadienoyl-CoA + 2 Fe(III)-[cytochrome b5] + 2 H2O. The catalysed reaction is (9Z)-pentadecenoyl-CoA + 2 Fe(II)-[cytochrome b5] + O2 + 2 H(+) = (9Z,12Z)-pentadecadienoyl-CoA + 2 Fe(III)-[cytochrome b5] + 2 H2O. The enzyme catalyses (9Z)-heptadecenoyl-CoA + 2 Fe(II)-[cytochrome b5] + O2 + 2 H(+) = (9Z,12Z)-heptadecadienoyl-CoA + 2 Fe(III)-[cytochrome b5] + 2 H2O. It participates in lipid metabolism; polyunsaturated fatty acid biosynthesis. In terms of biological role, ER (microsomal) omega-6 fatty acid desaturase introduces the second double bond in the biosynthesis of 18:3 fatty acids, important constituents of plant membranes. Delta(12)-desaturase with regioselectivity determined by the double bond (delta(9) position) and carboxyl group of the substrate. Can use both 16:1 and 18:1 fatty acids as substrates. It is thought to use cytochrome b5 as an electron donor and to act on fatty acids esterified to phosphatidylcholine (PC) and, possibly, other phospholipids. Very low constitutive hydroxylation activity. Required for desaturation of fatty acids present in extraplastidial membranes, including mitochondria. Required for salt tolerance during seed germination and early seedling growth. The chain is Delta(12)-fatty-acid desaturase from Arabidopsis thaliana (Mouse-ear cress).